The sequence spans 195 residues: Large ribosomal subunit protein uL18 (195 aa).

The protein belongs to the universal ribosomal protein uL18 family. As to quaternary structure, part of the 50S ribosomal subunit. Contacts the 5S and 23S rRNAs.

Functionally, this is one of the proteins that bind and probably mediate the attachment of the 5S RNA into the large ribosomal subunit, where it forms part of the central protuberance. The sequence is that of Large ribosomal subunit protein uL18 from Metallosphaera sedula (strain ATCC 51363 / DSM 5348 / JCM 9185 / NBRC 15509 / TH2).